We begin with the raw amino-acid sequence, 184 residues long: MQARDPHVNVIFVGLMGAGKTTVGRAVARRLDRPFFDSDHEIEARTGARIPVIFELEGEAGFRDREAQMIAELTQRENIVLATGGGAILRPENRKLLHERGLVVYLRANPHDLWLRTRKDKNRPLLQTDDPKAKLEALYEARDPLYRECAHFVIETGRPSVNGLVNMVLMQLEMAGIVAKPLQA.

Gly-17 to Thr-22 contributes to the ATP binding site. Thr-21 provides a ligand contact to Mg(2+). The substrate site is built by Asp-39, Arg-63, and Gly-85. Arg-123 lines the ATP pocket. A substrate-binding site is contributed by Arg-142.

This sequence belongs to the shikimate kinase family. In terms of assembly, monomer. The cofactor is Mg(2+).

It is found in the cytoplasm. It carries out the reaction shikimate + ATP = 3-phosphoshikimate + ADP + H(+). The protein operates within metabolic intermediate biosynthesis; chorismate biosynthesis; chorismate from D-erythrose 4-phosphate and phosphoenolpyruvate: step 5/7. Catalyzes the specific phosphorylation of the 3-hydroxyl group of shikimic acid using ATP as a cosubstrate. In Burkholderia pseudomallei (strain 1710b), this protein is Shikimate kinase.